A 200-amino-acid polypeptide reads, in one-letter code: MGVEELERKILEDAEKEAEEILEEAKRDAERIREKAEREAEEVRREILDRARREAETRRRREIAQAKLEIRQERLRVKEEYIEKAIERAEEKIRELAEEGRKEYLEFLKRSAIEAVNAISSDEVVLRANENDLMLLDEMLSEIRDETGKDVELGEPVEAVGGVIAESKDGSEAYDNTVDARLRRRRSEIVRRVSETLFGG.

The protein belongs to the V-ATPase E subunit family. Has multiple subunits with at least A(3), B(3), C, D, E, F, H, I and proteolipid K(x).

Its subcellular location is the cell membrane. Component of the A-type ATP synthase that produces ATP from ADP in the presence of a proton gradient across the membrane. This Methanopyrus kandleri (strain AV19 / DSM 6324 / JCM 9639 / NBRC 100938) protein is A-type ATP synthase subunit E.